We begin with the raw amino-acid sequence, 338 residues long: Phenylalanine--tRNA ligase alpha subunit (338 aa).

E253 contacts Mg(2+).

Belongs to the class-II aminoacyl-tRNA synthetase family. Phe-tRNA synthetase alpha subunit type 1 subfamily. Tetramer of two alpha and two beta subunits. The cofactor is Mg(2+).

The protein resides in the cytoplasm. It catalyses the reaction tRNA(Phe) + L-phenylalanine + ATP = L-phenylalanyl-tRNA(Phe) + AMP + diphosphate + H(+). The protein is Phenylalanine--tRNA ligase alpha subunit of Geotalea uraniireducens (strain Rf4) (Geobacter uraniireducens).